The following is a 626-amino-acid chain: Hemocyanin AA6 chain (626 aa).

Positions 170, 174, 201, 321, 325, and 361 each coordinate Cu cation. Ser374 bears the Phosphoserine mark.

It belongs to the tyrosinase family. Hemocyanin subfamily. Scorpion hemocyanin is a 24-chain polymer with 8 different chains identified, assembled in hexameric substructures. Three disulfide bonds are present. In terms of tissue distribution, hemolymph.

It localises to the secreted. The protein resides in the extracellular space. Functionally, hemocyanins are copper-containing oxygen carriers occurring freely dissolved in the hemolymph of many mollusks and arthropods. The chain is Hemocyanin AA6 chain from Androctonus australis (Sahara scorpion).